The sequence spans 125 residues: Cu-Zn superoxide dismutase-like protein OPG175 (125 aa).

Cysteines 52 and 102 form a disulfide.

It belongs to the Cu-Zn superoxide dismutase family.

It is found in the virion. It localises to the host cytoplasm. In terms of biological role, superoxide dismutase-like protein with no enzymatic activity. In Vaccinia virus (strain Western Reserve) (VACV), this protein is Cu-Zn superoxide dismutase-like protein OPG175 (OPG175).